We begin with the raw amino-acid sequence, 234 residues long: Probable glycerol uptake facilitator protein (234 aa).

Helical transmembrane passes span 3–23 (VYLA…GVVA) and 36–56 (GWIV…YLVG). Positions 64 to 66 (NPA) match the NPA 1 motif. A run of 3 helical transmembrane segments spans residues 82–102 (VPGY…LVYL), 134–154 (LLTE…IGAN), and 164–184 (LVGF…GYAI). Positions 185–187 (NPA) match the NPA 2 motif. A helical membrane pass occupies residues 214–234 (VPIIGPIIGGILGASLYNWLF).

The protein belongs to the MIP/aquaporin (TC 1.A.8) family.

Its subcellular location is the cell membrane. It carries out the reaction glycerol(in) = glycerol(out). Functionally, mediates glycerol diffusion across the cytoplasmic membrane via a pore-type mechanism. This chain is Probable glycerol uptake facilitator protein (glpF), found in Thermotoga maritima (strain ATCC 43589 / DSM 3109 / JCM 10099 / NBRC 100826 / MSB8).